An 883-amino-acid chain; its full sequence is N,N'-diacetylchitobiase (883 aa).

An N-terminal signal peptide occupies residues 1–17; it reads MLKHSLIAASVITTLAG. C18 is lipidated: N-palmitoyl cysteine. A lipid anchor (S-diacylglycerol cysteine) is attached at C18. 3 cysteine pairs are disulfide-bonded: C54/C64, C394/C402, and C502/C577. The Proton donor role is filled by E537.

The protein belongs to the glycosyl hydrolase 20 family. Post-translationally, this protein is probably a lipoprotein, its processing is inhibited by globomycin.

Its subcellular location is the cell outer membrane. The enzyme catalyses Hydrolysis of terminal non-reducing N-acetyl-D-hexosamine residues in N-acetyl-beta-D-hexosaminides.. It participates in glycan degradation; chitin degradation. In terms of biological role, hydrolysis of terminal, non-reducing N-acetyl-beta-D-glucosamine residues in chitobiose and higher analogs, and in glycoproteins. The polypeptide is N,N'-diacetylchitobiase (chb) (Vibrio harveyi (Beneckea harveyi)).